Reading from the N-terminus, the 147-residue chain is Small ribosomal subunit protein uS5 (147 aa).

Residues 9–72 (FQEVVVNIGR…DDAFKNLIHV (64 aa)) enclose the S5 DRBM domain.

This sequence belongs to the universal ribosomal protein uS5 family. As to quaternary structure, part of the 30S ribosomal subunit. Contacts proteins S4 and S8.

In terms of biological role, with S4 and S12 plays an important role in translational accuracy. Located at the back of the 30S subunit body where it stabilizes the conformation of the head with respect to the body. The sequence is that of Small ribosomal subunit protein uS5 from Helicobacter pylori (strain J99 / ATCC 700824) (Campylobacter pylori J99).